A 155-amino-acid polypeptide reads, in one-letter code: MMSLTFMAGLIFPVFMMLKGINPMSLLLALLTLSLCAVLWLGSFMSSWYAYILFIVYIGGILVLFIYVCMISSNYIASQHMYKSLLYAWGAVMLMSLTMETDTFIILGSNMMYTSVNIPMTILIFLSIYLLIVFFAVVNLMVNMTSILMVESSQV.

4 consecutive transmembrane segments (helical) span residues 24–44 (MSLL…LGSF), 51–71 (YILF…VCMI), 88–108 (AWGA…IILG), and 118–138 (IPMT…FAVV).

Belongs to the complex I subunit 6 family.

The protein resides in the mitochondrion membrane. It catalyses the reaction a ubiquinone + NADH + 5 H(+)(in) = a ubiquinol + NAD(+) + 4 H(+)(out). Functionally, core subunit of the mitochondrial membrane respiratory chain NADH dehydrogenase (Complex I) that is believed to belong to the minimal assembly required for catalysis. Complex I functions in the transfer of electrons from NADH to the respiratory chain. The immediate electron acceptor for the enzyme is believed to be ubiquinone. In Albinaria caerulea (Land snail), this protein is NADH-ubiquinone oxidoreductase chain 6 (ND6).